We begin with the raw amino-acid sequence, 395 residues long: Elongation factor Tu (395 aa).

In terms of domain architecture, tr-type G spans 10-204 (KPHVNIGTIG…AVDEYIPTPQ (195 aa)). The G1 stretch occupies residues 19–26 (GHVDHGKT). Residue 19–26 (GHVDHGKT) participates in GTP binding. Residue threonine 26 participates in Mg(2+) binding. Residues 60 to 64 (GITIS) are G2. A G3 region spans residues 81–84 (DCPG). Residues 81–85 (DCPGH) and 136–139 (NKCD) contribute to the GTP site. The G4 stretch occupies residues 136 to 139 (NKCD). Residues 174–176 (SAL) form a G5 region.

It belongs to the TRAFAC class translation factor GTPase superfamily. Classic translation factor GTPase family. EF-Tu/EF-1A subfamily. Monomer.

It localises to the cytoplasm. It catalyses the reaction GTP + H2O = GDP + phosphate + H(+). Its function is as follows. GTP hydrolase that promotes the GTP-dependent binding of aminoacyl-tRNA to the A-site of ribosomes during protein biosynthesis. The sequence is that of Elongation factor Tu from Geobacillus kaustophilus (strain HTA426).